A 181-amino-acid chain; its full sequence is Adenine phosphoribosyltransferase (181 aa).

The protein belongs to the purine/pyrimidine phosphoribosyltransferase family. In terms of assembly, homodimer.

The protein resides in the cytoplasm. The catalysed reaction is AMP + diphosphate = 5-phospho-alpha-D-ribose 1-diphosphate + adenine. Its pathway is purine metabolism; AMP biosynthesis via salvage pathway; AMP from adenine: step 1/1. In terms of biological role, catalyzes a salvage reaction resulting in the formation of AMP, that is energically less costly than de novo synthesis. This is Adenine phosphoribosyltransferase from Mesorhizobium japonicum (strain LMG 29417 / CECT 9101 / MAFF 303099) (Mesorhizobium loti (strain MAFF 303099)).